The primary structure comprises 143 residues: Nucleoside diphosphate kinase (143 aa).

Residues Lys11, Phe59, Arg87, Thr93, Arg104, and Asn114 each contribute to the ATP site. His117 serves as the catalytic Pros-phosphohistidine intermediate.

Belongs to the NDK family. As to quaternary structure, homotetramer. Mg(2+) is required as a cofactor.

It localises to the cytoplasm. The enzyme catalyses a 2'-deoxyribonucleoside 5'-diphosphate + ATP = a 2'-deoxyribonucleoside 5'-triphosphate + ADP. It carries out the reaction a ribonucleoside 5'-diphosphate + ATP = a ribonucleoside 5'-triphosphate + ADP. Major role in the synthesis of nucleoside triphosphates other than ATP. The ATP gamma phosphate is transferred to the NDP beta phosphate via a ping-pong mechanism, using a phosphorylated active-site intermediate. This Shewanella baltica (strain OS223) protein is Nucleoside diphosphate kinase.